The sequence spans 85 residues: DNA-directed RNA polymerase subunit omega (85 aa).

This sequence belongs to the RNA polymerase subunit omega family. The RNAP catalytic core consists of 2 alpha, 1 beta, 1 beta' and 1 omega subunit. When a sigma factor is associated with the core the holoenzyme is formed, which can initiate transcription.

It catalyses the reaction RNA(n) + a ribonucleoside 5'-triphosphate = RNA(n+1) + diphosphate. Its function is as follows. Promotes RNA polymerase assembly. Latches the N- and C-terminal regions of the beta' subunit thereby facilitating its interaction with the beta and alpha subunits. This is DNA-directed RNA polymerase subunit omega from Latilactobacillus sakei subsp. sakei (strain 23K) (Lactobacillus sakei subsp. sakei).